Here is a 447-residue protein sequence, read N- to C-terminus: Glucose-6-phosphate isomerase (447 aa).

The active-site Proton donor is E288. Active-site residues include H309 and K423.

Belongs to the GPI family.

The protein localises to the cytoplasm. The enzyme catalyses alpha-D-glucose 6-phosphate = beta-D-fructose 6-phosphate. Its pathway is carbohydrate biosynthesis; gluconeogenesis. The protein operates within carbohydrate degradation; glycolysis; D-glyceraldehyde 3-phosphate and glycerone phosphate from D-glucose: step 2/4. Its function is as follows. Catalyzes the reversible isomerization of glucose-6-phosphate to fructose-6-phosphate. The protein is Glucose-6-phosphate isomerase of Lactobacillus gasseri (strain ATCC 33323 / DSM 20243 / BCRC 14619 / CIP 102991 / JCM 1131 / KCTC 3163 / NCIMB 11718 / NCTC 13722 / AM63).